The following is a 184-amino-acid chain: Large ribosomal subunit protein uL5 (184 aa).

This sequence belongs to the universal ribosomal protein uL5 family. In terms of assembly, part of the 50S ribosomal subunit; part of the 5S rRNA/L5/L18/L25 subcomplex. Contacts the 5S rRNA and the P site tRNA. Forms a bridge to the 30S subunit in the 70S ribosome.

This is one of the proteins that bind and probably mediate the attachment of the 5S RNA into the large ribosomal subunit, where it forms part of the central protuberance. In the 70S ribosome it contacts protein S13 of the 30S subunit (bridge B1b), connecting the 2 subunits; this bridge is implicated in subunit movement. Contacts the P site tRNA; the 5S rRNA and some of its associated proteins might help stabilize positioning of ribosome-bound tRNAs. This Agrobacterium fabrum (strain C58 / ATCC 33970) (Agrobacterium tumefaciens (strain C58)) protein is Large ribosomal subunit protein uL5.